The sequence spans 222 residues: (4-{4-[2-(gamma-L-glutamylamino)ethyl]phenoxymethyl}furan-2-yl)methanamine synthase (222 aa).

The protein belongs to the MfnF family.

The catalysed reaction is gamma-L-glutamyltyramine + [5-(aminomethyl)furan-3-yl]methyl diphosphate = (4-{4-[2-(gamma-L-glutamylamino)ethyl]phenoxymethyl}furan-2-yl)methanamine + diphosphate. It participates in cofactor biosynthesis; methanofuran biosynthesis. Catalyzes the condensation between 5-(aminomethyl)-3-furanmethanol diphosphate (F1-PP) and gamma-glutamyltyramine to produce APMF-Glu. This is (4-{4-[2-(gamma-L-glutamylamino)ethyl]phenoxymethyl}furan-2-yl)methanamine synthase from Methanococcus vannielii.